Here is a 47-residue protein sequence, read N- to C-terminus: Cytochrome b559 subunit beta (47 aa).

Residues 23 to 39 (WLAVHALAIPSVFFLGA) form a helical membrane-spanning segment. His27 contributes to the heme binding site.

This sequence belongs to the PsbE/PsbF family. Heterodimer of an alpha subunit and a beta subunit. PSII is composed of 1 copy each of membrane proteins PsbA, PsbB, PsbC, PsbD, PsbE, PsbF, PsbH, PsbI, PsbJ, PsbK, PsbL, PsbM, PsbT, PsbX, PsbY, Psb30/Ycf12, peripheral proteins PsbO, CyanoQ (PsbQ), PsbU, PsbV and a large number of cofactors. It forms dimeric complexes. Heme b is required as a cofactor.

Its subcellular location is the cellular thylakoid membrane. Functionally, this b-type cytochrome is tightly associated with the reaction center of photosystem II (PSII). PSII is a light-driven water:plastoquinone oxidoreductase that uses light energy to abstract electrons from H(2)O, generating O(2) and a proton gradient subsequently used for ATP formation. It consists of a core antenna complex that captures photons, and an electron transfer chain that converts photonic excitation into a charge separation. The chain is Cytochrome b559 subunit beta from Prochlorococcus marinus subsp. pastoris (strain CCMP1986 / NIES-2087 / MED4).